We begin with the raw amino-acid sequence, 585 residues long: Polyadenylate-binding protein, cytoplasmic and nuclear (585 aa).

The tract at residues 14–37 (QLKIEEQTAPTTTESETPKVETSG) is disordered. 4 consecutive RRM domains span residues 38–116 (ASLY…WSQR), 126–203 (GNIY…LHVS), 219–296 (TNVY…RAQK), and 322–399 (VNLF…IAQR). The region spanning 488 to 567 (GQFPRNGQQQ…AHAAYQKFKE (80 aa)) is the PABC domain.

The protein belongs to the polyadenylate-binding protein type-1 family.

Its subcellular location is the cytoplasm. It is found in the nucleus. Binds the poly(A) tail of mRNA. Appears to be an important mediator of the multiple roles of the poly(A) tail in mRNA biogenesis, stability and translation. In the nucleus, involved in both mRNA cleavage and polyadenylation. Is also required for efficient mRNA export to the cytoplasm. Acts in concert with a poly(A)-specific nuclease (PAN) to affect poly(A) tail shortening, which may occur concomitantly with either nucleocytoplasmic mRNA transport or translational initiation. In the cytoplasm, stimulates translation initiation and regulates mRNA decay through translation termination-coupled poly(A) shortening, probably mediated by PAN. The chain is Polyadenylate-binding protein, cytoplasmic and nuclear (PAB1) from Eremothecium gossypii (strain ATCC 10895 / CBS 109.51 / FGSC 9923 / NRRL Y-1056) (Yeast).